We begin with the raw amino-acid sequence, 291 residues long: ATP synthase subunit a (291 aa).

6 helical membrane-spanning segments follow: residues 51–71 (FSFTNPSLFMLLTLSLVLLLV), 117–137 (FFPCIFVTFTFLLFCNLQGMI), 146–166 (HFLITLGLSFSIFIGITIVGF), 173–193 (FLSFLLPAGVPLPLAPFLVLL), 213–233 (MMAGHSLVKILSGFAWTMLCM), and 239–259 (FIGDLGPLFIVLALTGPELGV).

It belongs to the ATPase A chain family. As to quaternary structure, F-type ATPases have 2 components, CF(1) - the catalytic core - and CF(0) - the membrane proton channel. CF(1) has five subunits: alpha(3), beta(3), gamma(1), delta(1), epsilon(1). CF(0) has three main subunits: a, b and c.

The protein localises to the mitochondrion inner membrane. Its function is as follows. Mitochondrial membrane ATP synthase (F(1)F(0) ATP synthase or Complex V) produces ATP from ADP in the presence of a proton gradient across the membrane which is generated by electron transport complexes of the respiratory chain. F-type ATPases consist of two structural domains, F(1) - containing the extramembraneous catalytic core and F(0) - containing the membrane proton channel, linked together by a central stalk and a peripheral stalk. During catalysis, ATP synthesis in the catalytic domain of F(1) is coupled via a rotary mechanism of the central stalk subunits to proton translocation. Key component of the proton channel; it may play a direct role in the translocation of protons across the membrane. In Vicia faba (Broad bean), this protein is ATP synthase subunit a (ATP6).